We begin with the raw amino-acid sequence, 382 residues long: uncharacterized protein (382 aa).

The next 12 helical transmembrane spans lie at 8–28, 45–65, 75–95, 102–122, 131–151, 157–177, 204–224, 231–251, 270–290, 291–311, 325–345, and 349–369; these read VMLLLCGLLLLTLAIAVLNTL, MVSSSYFTGNLVGTLFTGYLI, YLASLIFAAGCVGLGVMVGFW, FIAGIGCAMIWVVVESALMCS, LLAAYMMVYYMGTFLGQLLVS, LLHVLPWVTGMILAGILPLLF, LGVNGCIISGIVLGSLYGLMP, GMANASIGFWMAVLVSAGILG, VQVFVVILGSIAMLTQAAMAP, ALFILGAAGFTLYPVAMAWAC, ALLLSYTVGSLLGPSFAAMLM, and SDNLLFIMIASVSFIYLLMLL.

The protein belongs to the major facilitator superfamily. YcaD (TC 2.A.1.26) family.

Its subcellular location is the cell inner membrane. This is an uncharacterized protein from Salmonella newport (strain SL254).